Here is a 753-residue protein sequence, read N- to C-terminus: 5-methyltetrahydropteroyltriglutamate--homocysteine methyltransferase (753 aa).

Residues 17–20 and lysine 117 contribute to the 5-methyltetrahydropteroyltri-L-glutamate site; that span reads RELK. L-homocysteine-binding positions include 431–433 and glutamate 484; that span reads IGS. L-methionine is bound by residues 431–433 and glutamate 484; that span reads IGS. 5-methyltetrahydropteroyltri-L-glutamate is bound by residues 515–516 and tryptophan 561; that span reads RC. L-homocysteine is bound at residue aspartate 599. Aspartate 599 contributes to the L-methionine binding site. Glutamate 605 lines the 5-methyltetrahydropteroyltri-L-glutamate pocket. Histidine 641, cysteine 643, and glutamate 665 together coordinate Zn(2+). Catalysis depends on histidine 694, which acts as the Proton donor. Residue cysteine 726 participates in Zn(2+) binding.

The protein belongs to the vitamin-B12 independent methionine synthase family. The cofactor is Zn(2+).

The catalysed reaction is 5-methyltetrahydropteroyltri-L-glutamate + L-homocysteine = tetrahydropteroyltri-L-glutamate + L-methionine. It functions in the pathway amino-acid biosynthesis; L-methionine biosynthesis via de novo pathway; L-methionine from L-homocysteine (MetE route): step 1/1. In terms of biological role, catalyzes the transfer of a methyl group from 5-methyltetrahydrofolate to homocysteine resulting in methionine formation. This chain is 5-methyltetrahydropteroyltriglutamate--homocysteine methyltransferase, found in Citrobacter koseri (strain ATCC BAA-895 / CDC 4225-83 / SGSC4696).